Here is a 677-residue protein sequence, read N- to C-terminus: DNA ligase (677 aa).

NAD(+) contacts are provided by residues 34–38 (DAEYD), 83–84 (SL), and Glu117. The active-site N6-AMP-lysine intermediate is Lys119. NAD(+) contacts are provided by Arg140, Glu175, Lys283, and Lys307. Zn(2+) contacts are provided by Cys401, Cys404, Cys419, and Cys425. A BRCT domain is found at 594–677 (SHLSLLHGKT…QYISPNTNEN (84 aa)).

This sequence belongs to the NAD-dependent DNA ligase family. LigA subfamily. The cofactor is Mg(2+). It depends on Mn(2+) as a cofactor.

The enzyme catalyses NAD(+) + (deoxyribonucleotide)n-3'-hydroxyl + 5'-phospho-(deoxyribonucleotide)m = (deoxyribonucleotide)n+m + AMP + beta-nicotinamide D-nucleotide.. Functionally, DNA ligase that catalyzes the formation of phosphodiester linkages between 5'-phosphoryl and 3'-hydroxyl groups in double-stranded DNA using NAD as a coenzyme and as the energy source for the reaction. It is essential for DNA replication and repair of damaged DNA. The chain is DNA ligase from Ehrlichia canis (strain Jake).